A 392-amino-acid chain; its full sequence is uncharacterized protein (392 aa).

This sequence belongs to the hcp1 family.

This is an uncharacterized protein from Escherichia coli (strain K12).